The sequence spans 374 residues: NAD-capped RNA hydrolase ndx-9 (374 aa).

Residues cysteine 181, cysteine 184, cysteine 199, and cysteine 202 each coordinate Zn(2+). Substrate contacts are provided by residues tyrosine 207, 243–245 (AGF), glutamate 259, glutamate 263, and glutamate 307. Residues 208-336 (PTFSPVSITL…LADPLLKNLP (129 aa)) form the Nudix hydrolase domain. The Mg(2+) site is built by alanine 243, glutamate 259, glutamate 263, and glutamate 307. Residues 244–265 (GFAHSGESMAECARREIAEEVG) carry the Nudix box motif. Residues 367–369 (LEN) carry the Microbody targeting signal motif.

This sequence belongs to the Nudix hydrolase family. NudC subfamily. As to quaternary structure, homodimer. Requires Mg(2+) as cofactor. It depends on Mn(2+) as a cofactor. The cofactor is Zn(2+).

The catalysed reaction is a 5'-end NAD(+)-phospho-ribonucleoside in mRNA + H2O = a 5'-end phospho-adenosine-phospho-ribonucleoside in mRNA + beta-nicotinamide D-ribonucleotide + 2 H(+). It carries out the reaction NAD(+) + H2O = beta-nicotinamide D-ribonucleotide + AMP + 2 H(+). It catalyses the reaction NADH + H2O = reduced beta-nicotinamide D-ribonucleotide + AMP + 2 H(+). In terms of biological role, mRNA decapping enzyme that specifically removes the nicotinamide adenine dinucleotide (NAD) cap from a subset of mRNAs by hydrolyzing the diphosphate linkage to produce nicotinamide mononucleotide (NMN) and 5' monophosphate mRNA. The NAD-cap is present at the 5'-end of some RNAs; in contrast to the canonical N7 methylguanosine (m7G) cap, the NAD cap promotes mRNA decay. Mediates the hydrolysis of some nucleoside diphosphate derivatives. The polypeptide is NAD-capped RNA hydrolase ndx-9 (ndx-9) (Caenorhabditis elegans).